The primary structure comprises 476 residues: ATP synthase subunit beta (476 aa).

152 to 159 (GGAGVGKT) contacts ATP.

This sequence belongs to the ATPase alpha/beta chains family. F-type ATPases have 2 components, CF(1) - the catalytic core - and CF(0) - the membrane proton channel. CF(1) has five subunits: alpha(3), beta(3), gamma(1), delta(1), epsilon(1). CF(0) has three main subunits: a(1), b(2) and c(9-12). The alpha and beta chains form an alternating ring which encloses part of the gamma chain. CF(1) is attached to CF(0) by a central stalk formed by the gamma and epsilon chains, while a peripheral stalk is formed by the delta and b chains.

Its subcellular location is the cell inner membrane. It catalyses the reaction ATP + H2O + 4 H(+)(in) = ADP + phosphate + 5 H(+)(out). In terms of biological role, produces ATP from ADP in the presence of a proton gradient across the membrane. The catalytic sites are hosted primarily by the beta subunits. This is ATP synthase subunit beta from Acidiphilium cryptum (strain JF-5).